We begin with the raw amino-acid sequence, 861 residues long: Importin subunit beta-1 (861 aa).

Serine 2 carries the N-acetylserine modification. 19 HEAT repeats span residues 3–35 (TAEFAQLLENSILSPDQNIRLTSETQLKKLSND), 37–66 (FLQFAGLSSQVLIDENTKLEGRILAALTLK), 90–129 (PEAKNQIKTNALTALVSIEPRIANAAAQLIAAIADIELPH), 134–164 (ELMKIMVDNTGAEQPENVKRASLLALGYMCE), 177–208 (SNNILIAIVQGAQSTETSKAVRLAALNALADS), 219–255 (EGERNYLMQVVCEATQAEDIEVQAAAFGCLCKIMSLY), 260–306 (KPYM…ELAQ), 317–362 (FALS…AQNC), 367–395 (LEPVLEFVEQNITADNWRNREAAVMAFGS), 402–442 (KVQR…ADSV), 452–484 (LPGVVQACLIGLQDHPKVATNCSWTIINLVEQL), 496–530 (YPALVDGLIGAANRIDNEFNARASAFSALTTMVEY), 536–586 (AETS…VIRK), 592–629 (EPVADMLMGLFFRLLEKKDSAFIEDDVFYAISALAASL), 634–669 (EKYLETFSPYLLKALNQVDSPVSITAVGFIADISNS), 675–713 (RRYSDAMMNVLAQMISNPNARRELKPAVLSVFGDIASNI), 718–764 (IPYL…IVAG), 773–812 (FPYVGTIFQFIAQVAEDPQLYSEDATSRAAVGLIGDIAAM), and 819–859 (KQFY…KRQL). The region spanning 25 to 106 (SETQLKKLSN…KTNALTALVS (82 aa)) is the Importin N-terminal domain. Serine 836 is subject to Phosphoserine.

This sequence belongs to the importin beta family. Importin beta-1 subfamily. As to quaternary structure, forms a complex with the importin alpha subunit (SRP1/KAP60). Interacts with Ran (GSP1); interacts specifically with the GTP-bound form of Ran (GTP-Ran), protecting it from GTP hydrolysis and nucleotide exchange. Interacts with nucleoporin NUP1.

It is found in the cytoplasm. Its subcellular location is the nucleus. It localises to the nuclear pore complex. In terms of biological role, importin beta subunit that functions in nuclear protein import through association with the importin alpha subunit, which binds to the classical nuclear localization signal (cNLS) in cargo substrates. Docking of the importin/substrate complex to the nuclear pore complex (NPC) is mediated by importin beta through binding to nucleoporin FxFG repeats and the complex is subsequently translocated through the pore by an energy requiring, Ran-dependent mechanism. At the nucleoplasmic side of the NPC, GTP-Ran binds to importin beta and the three components separate, leading to release of the cargo. Importin alpha and beta are re-exported from the nucleus to the cytoplasm where GTP hydrolysis releases Ran from importin beta. The directionality of nuclear import is thought to be conferred by an asymmetric distribution of the GTP- and GDP-bound forms of Ran between the cytoplasm and nucleus. Mediates the nuclear import of histones H2A and H2B. Mediates the nuclear import of transcription factor GCN4. This chain is Importin subunit beta-1, found in Saccharomyces cerevisiae (strain ATCC 204508 / S288c) (Baker's yeast).